A 163-amino-acid polypeptide reads, in one-letter code: 3-isopropylmalate dehydratase small subunit (163 aa).

It belongs to the LeuD family. LeuD type 2 subfamily. Heterodimer of LeuC and LeuD.

The catalysed reaction is (2R,3S)-3-isopropylmalate = (2S)-2-isopropylmalate. Its pathway is amino-acid biosynthesis; L-leucine biosynthesis; L-leucine from 3-methyl-2-oxobutanoate: step 2/4. In terms of biological role, catalyzes the isomerization between 2-isopropylmalate and 3-isopropylmalate, via the formation of 2-isopropylmaleate. The sequence is that of 3-isopropylmalate dehydratase small subunit from Brachyspira hyodysenteriae (strain ATCC 49526 / WA1).